The primary structure comprises 595 residues: Putative histone-lysine N-methyltransferase PRDM6 (595 aa).

The segment at 27–90 (FPHGGAGPLK…STPASSSTSA (64 aa)) is disordered. Residues 30 to 40 (GGAGPLKGSGA) show a composition bias toward gly residues. Positions 49–59 (PLQPPPPPPPP) are enriched in pro residues. A compositionally biased stretch (low complexity) spans 71–90 (PRPASLSSASSTPASSSTSA). Positions 246–365 (REVCLCTSTV…RGTELLVWYN (120 aa)) constitute an SET domain. The C2H2-type 1; degenerate zinc-finger motif lies at 473–495 (WKCGQCFKTFTQRILLQMHVCTQ). 2 consecutive C2H2-type zinc fingers follow at residues 501-523 (YQCGHCSQSFSQPSELRNHVVTH) and 529-551 (FKCGYCGRAFAGATTLNNHIRTH). The segment at 557 to 579 (FKCERCERSFTQATQLSRHQRMP) adopts a C2H2-type 4; degenerate zinc-finger fold.

The protein belongs to the class V-like SAM-binding methyltransferase superfamily. Interacts with HDAC1, HDAC2, HDAC3, CBX1 and EP300.

It is found in the nucleus. The catalysed reaction is L-lysyl(20)-[histone H4] + S-adenosyl-L-methionine = N(6)-methyl-L-lysyl(20)-[histone H4] + S-adenosyl-L-homocysteine + H(+). Its function is as follows. Putative histone methyltransferase that acts as a transcriptional repressor of smooth muscle gene expression. Promotes the transition from differentiated to proliferative smooth muscle by suppressing differentiation and maintaining the proliferative potential of vascular smooth muscle cells. Also plays a role in endothelial cells by inhibiting endothelial cell proliferation, survival and differentiation. It is unclear whether it has histone methyltransferase activity in vivo. According to some authors, it does not act as a histone methyltransferase by itself and represses transcription by recruiting EHMT2/G9a. According to others, it possesses histone methyltransferase activity when associated with other proteins and specifically methylates 'Lys-20' of histone H4 in vitro. 'Lys-20' methylation represents a specific tag for epigenetic transcriptional repression. The chain is Putative histone-lysine N-methyltransferase PRDM6 (PRDM6) from Homo sapiens (Human).